The following is a 200-amino-acid chain: Recombination protein RecR (200 aa).

The C4-type zinc-finger motif lies at C59 to C74. The region spanning A82–P177 is the Toprim domain.

Belongs to the RecR family.

In terms of biological role, may play a role in DNA repair. It seems to be involved in an RecBC-independent recombinational process of DNA repair. It may act with RecF and RecO. The chain is Recombination protein RecR from Burkholderia mallei (strain NCTC 10247).